The following is a 565-amino-acid chain: 2-isopropylmalate synthase (565 aa).

A Pyruvate carboxyltransferase domain is found at 37 to 312; sequence PRWCSVDLRD…DPMIDLSDID (276 aa). Residues Asp46, His251, His253, and Asn287 each coordinate Mg(2+). Residues 446–565 form a regulatory domain region; that stretch reads EGGDPAASLE…SAVNRASRES (120 aa).

Belongs to the alpha-IPM synthase/homocitrate synthase family. LeuA type 2 subfamily. As to quaternary structure, homodimer. The cofactor is Mg(2+).

The protein localises to the cytoplasm. It carries out the reaction 3-methyl-2-oxobutanoate + acetyl-CoA + H2O = (2S)-2-isopropylmalate + CoA + H(+). It functions in the pathway amino-acid biosynthesis; L-leucine biosynthesis; L-leucine from 3-methyl-2-oxobutanoate: step 1/4. Catalyzes the condensation of the acetyl group of acetyl-CoA with 3-methyl-2-oxobutanoate (2-ketoisovalerate) to form 3-carboxy-3-hydroxy-4-methylpentanoate (2-isopropylmalate). This Parafrankia sp. (strain EAN1pec) protein is 2-isopropylmalate synthase.